The primary structure comprises 282 residues: HTH-type transcriptional activator RhaR (282 aa).

One can recognise an HTH araC/xylS-type domain in the interval 179–277 (DKLITALANS…GMTPSQWRHL (99 aa)). DNA-binding regions (H-T-H motif) lie at residues 196-217 (DAFCQQEQCSERVLRQQFRAQT) and 244-267 (ISEISMQCGFEDSNYFSVVFTRET).

Binds DNA as a dimer.

It is found in the cytoplasm. Its function is as follows. Activates expression of the rhaSR operon in response to L-rhamnose. In Salmonella arizonae (strain ATCC BAA-731 / CDC346-86 / RSK2980), this protein is HTH-type transcriptional activator RhaR.